The sequence spans 393 residues: tRNA(Met) cytidine acetate ligase (393 aa).

Residues Gly81, Asn142, and Arg167 each coordinate ATP.

It belongs to the TmcAL family.

Its subcellular location is the cytoplasm. The catalysed reaction is cytidine(34) in elongator tRNA(Met) + acetate + ATP = N(4)-acetylcytidine(34) in elongator tRNA(Met) + AMP + diphosphate. In terms of biological role, catalyzes the formation of N(4)-acetylcytidine (ac(4)C) at the wobble position of elongator tRNA(Met), using acetate and ATP as substrates. First activates an acetate ion to form acetyladenylate (Ac-AMP) and then transfers the acetyl group to tRNA to form ac(4)C34. This chain is tRNA(Met) cytidine acetate ligase, found in Bacillus anthracis (strain A0248).